Here is a 428-residue protein sequence, read N- to C-terminus: Enolase (428 aa).

Glutamine 163 lines the (2R)-2-phosphoglycerate pocket. Glutamate 205 serves as the catalytic Proton donor. Mg(2+)-binding residues include aspartate 242, glutamate 285, and aspartate 312. (2R)-2-phosphoglycerate is bound by residues lysine 337, arginine 366, serine 367, and lysine 388. Lysine 337 acts as the Proton acceptor in catalysis.

The protein belongs to the enolase family. Mg(2+) serves as cofactor.

The protein resides in the cytoplasm. It localises to the secreted. Its subcellular location is the cell surface. It carries out the reaction (2R)-2-phosphoglycerate = phosphoenolpyruvate + H2O. It functions in the pathway carbohydrate degradation; glycolysis; pyruvate from D-glyceraldehyde 3-phosphate: step 4/5. Its function is as follows. Catalyzes the reversible conversion of 2-phosphoglycerate (2-PG) into phosphoenolpyruvate (PEP). It is essential for the degradation of carbohydrates via glycolysis. This Brevibacillus brevis (strain 47 / JCM 6285 / NBRC 100599) protein is Enolase.